We begin with the raw amino-acid sequence, 1000 residues long: ATP-dependent DNA/RNA helicase DHX36 (1000 aa).

Positions methionine 1–glycine 43 are required for recruitment to cytoplasmic stress granules. Residues methionine 1 to glutamate 53 are disordered. Residues methionine 1–alanine 96 form a required for the pre-miR-134 transport region. The necessary for nuclear and nucleolar caps localizations stretch occupies residues methionine 1 to methionine 192. A compositionally biased stretch (gly residues) spans proline 15 to glycine 40. The interval histidine 45–lysine 67 is DSM (DHX36-specific motif). Residues histidine 45 to lysine 97 form a required for G4-DNA- and G4-RNA-binding region. 2 recA-like domain regions span residues asparagine 98–isoleucine 378 and proline 379–leucine 620. Serine 153 bears the Phosphoserine mark. Positions valine 209–proline 379 constitute a Helicase ATP-binding domain. An ATP-binding site is contributed by glycine 225–threonine 230. Residues arginine 257–glutamine 309 are necessary for interaction with single-stranded DNA at the 3'-end of the G4-DNA structure. Residues aspartate 326–histidine 329 carry the DEAH box motif. Residues glutamate 327 and histidine 329 each coordinate Mg(2+). Residues alanine 469–arginine 639 enclose the Helicase C-terminal domain. The necessary for interaction with single-stranded DNA at the 3'-end of the G4-DNA structure stretch occupies residues tryptophan 490–serine 549. Positions aspartate 509–methionine 520 match the Nuclear localization signal motif. ATP contacts are provided by residues serine 549 and arginine 594–arginine 597. Residues proline 621–valine 690 are WH domain. 3 necessary for interaction with single-stranded DNA at the 3'-end of the G4-DNA structure regions span residues glutamate 630–proline 689, asparagine 841–histidine 852, and histidine 862–tyrosine 892. An OB-fold-like subdomains region spans residues proline 833–valine 897. The residue at position 939 (lysine 939) is an N6-acetyllysine.

In terms of assembly, found in a multi-helicase-TICAM1 complex at least composed of DHX36, DDX1, DDX21 and TICAM1; this complex exists in resting cells with or without dsRNA poly(I:C) ligand stimulation. Interacts (via C-terminus) with TICAM1 (via TIR domain). Interacts (via C-terminus) with DDX21; this interaction serves as bridges to TICAM1. Interacts with TERT; this interaction is dependent on the ability of DHX36 to bind to the G-quadruplex RNA (G4-RNA) structure present in the telomerase RNA template component (TERC). Interacts with DKC1; this interaction is dependent on the ability of DHX36 to bind to the G4-RNA structure present in TERC. Interacts with PARN; this interaction stimulates PARN to enhance uPA mRNA decay. Interacts with EXOSC3; this interaction occurs in a RNase-insensitive manner. Interacts with EXOSC10; this interaction occurs in a RNase-insensitive manner. Interacts with ILF3; this interaction occurs in a RNA-dependent manner. Interacts with ELAVL1; this interaction occurs in an RNA-dependent manner. Interacts with DDX5; this interaction occurs in a RNA-dependent manner. Interacts with DDX17; this interaction occurs in a RNA-dependent manner. Interacts with HDAC1; this interaction occurs in a RNA-dependent manner. Interacts with HDAC3; this interaction occurs in a RNA-dependent manner. Interacts with HDAC4. Interacts with AGO1. Interacts with AGO2. Interacts with ERCC6. Requires Mg(2+) as cofactor.

Its subcellular location is the nucleus. The protein resides in the cytoplasm. It is found in the cytosol. It localises to the stress granule. The protein localises to the nucleus speckle. Its subcellular location is the chromosome. The protein resides in the telomere. It is found in the mitochondrion. It localises to the perikaryon. The protein localises to the cell projection. Its subcellular location is the dendrite. The protein resides in the axon. It carries out the reaction ATP + H2O = ADP + phosphate + H(+). Its activity is regulated as follows. ATPase activity is enhanced in the presence of homomeric poly(U) RNAs, but not by double-stranded DNA (dsDNA), double-stranded RNA (dsRNA) and tRNA. Multifunctional ATP-dependent helicase that unwinds G-quadruplex (G4) structures. Plays a role in many biological processes such as genomic integrity, gene expression regulations and as a sensor to initiate antiviral responses. G4 structures correspond to helical structures containing guanine tetrads. Binds with high affinity to and unwinds G4 structures that are formed in nucleic acids (G4-DNA and G4-RNA). Plays a role in genomic integrity. Converts the G4-RNA structure present in telomerase RNA template component (TREC) into a double-stranded RNA to promote P1 helix formation that acts as a template boundary ensuring accurate reverse transcription. Plays a role in transcriptional regulation. Resolves G4-DNA structures in promoters of genes, such as YY1, KIT/c-kit and ALPL and positively regulates their expression. Plays a role in post-transcriptional regulation. Unwinds a G4-RNA structure located in the 3'-UTR polyadenylation site of the pre-mRNA TP53 and stimulates TP53 pre-mRNA 3'-end processing in response to ultraviolet (UV)-induced DNA damage. Binds to the precursor-microRNA-134 (pre-miR-134) terminal loop and regulates its transport into the synapto-dendritic compartment. Involved in the pre-miR-134-dependent inhibition of target gene expression and the control of dendritic spine size. Plays a role in the regulation of cytoplasmic mRNA translation and mRNA stability. Binds to both G4-RNA structures and alternative non-quadruplex-forming sequence within the 3'-UTR of the PITX1 mRNA regulating negatively PITX1 protein expression. Binds to both G4-RNA structure in the 5'-UTR and AU-rich elements (AREs) localized in the 3'-UTR of NKX2-5 mRNA to either stimulate protein translation or induce mRNA decay in an ELAVL1-dependent manner, respectively. Also binds to ARE sequences present in several mRNAs mediating exosome-mediated 3'-5' mRNA degradation. Involved in cytoplasmic urokinase-type plasminogen activator (uPA) mRNA decay. Component of a multi-helicase-TICAM1 complex that acts as a cytoplasmic sensor of viral double-stranded RNA (dsRNA) and plays a role in the activation of a cascade of antiviral responses including the induction of pro-inflammatory cytokines via the adapter molecule TICAM1. Required for the early embryonic development and hematopoiesis. Involved in the regulation of cardioblast differentiation and proliferation during heart development. Involved in spermatogonia differentiation. May play a role in ossification. This chain is ATP-dependent DNA/RNA helicase DHX36, found in Rattus norvegicus (Rat).